The chain runs to 622 residues: MASPLPSGFPARRNSRLDVFLRRHLPPEVYDAVRAYEPCIVVSNSENHILKYVVLSDRLVYLTENPPKSIRRVVALRDVVAIDLIDDYPEFLSSPDREISQHIRIIYSSTVLKKECKKSNSVRKFLFPFHHTKANNKKVKEEKNGLAFWRSKESRSLKESPLRDQQESSTPSKDSTLCPRPGLKKLSLHGQGAFRPLPSPSRRSSQSAPTTGKAVSEPSCTTNTKEPQGLPDHNSISEIPFKCNGNGNEFYLGNSLLDSPSQSNSNLEKKESELHLYVISTTSSIFLHLKSSWNNYIIKATLLQDPFYASEFSPAIGSQKPYRSEEKIKHFSQLKSELFLKDNSLRRILSLLMELKVAAQKNFILKRLFWKTSDLFYFIVNKLHEYLPESRDKNALQNQSQRVDELVACIEIIQTLVLMFRETETESSRLNTLAAKKGALFNLLVILISEPQIPKSCPVFDIQLVADSALVRMSFDAELQKLILEYTNTATALLYEILLVFQQGNLGLGSTKFAISWIMSFLQSCPPIITFVASIVKQVVRGLSASFQLLSPCQAVLLYQQFYILKSCLRHSRTLAEYIRNNYREEFRYFIHMPALQKRLPLCYPITQPTIQLFHEVLKLVE.

A compositionally biased stretch (basic and acidic residues) spans 157 to 166 (LKESPLRDQQ). Positions 157-238 (LKESPLRDQQ…GLPDHNSISE (82 aa)) are disordered.

This is an uncharacterized protein from Homo sapiens (Human).